Here is a 335-residue protein sequence, read N- to C-terminus: MDERIISSETVDAEEVSFETSLRPQNLSQYIGQDKVKNNLTVFIEAATLRNEALDHVLLYGPPGLGKTTLAMVIAAEMGSQIKTTSGPAIERPGDLATILTSLEPGDVLFIDEIHRLSRAIEEILYPAMEDYCLDIVIGTGPTARSVRLDLPPFTLIGATTRAGLLSAPLRDRFGVIDHLEFYTEEQLTEIVLRTSNILDTKIDDLGAREIARRSRGTPRIANRLLKRVRDFAQVRGNGTVTEKLAKEALTLLQVDPRGLDTIDQKLLHTIIQSFRGGPVGLDTIAASIGEERETIEDMQEPYLLQIGFLQRTPRGRIATETAYNHLGISYEKEV.

The large ATPase domain (RuvB-L) stretch occupies residues 1-183; it reads MDERIISSET…FGVIDHLEFY (183 aa). ATP-binding positions include L22, R23, G64, K67, T68, T69, 130-132, R173, Y183, and R220; that span reads EDY. T68 is a Mg(2+) binding site. Positions 184-254 are small ATPAse domain (RuvB-S); that stretch reads TEEQLTEIVL…LAKEALTLLQ (71 aa). Positions 257–335 are head domain (RuvB-H); it reads PRGLDTIDQK…HLGISYEKEV (79 aa). 3 residues coordinate DNA: R293, R312, and R317.

The protein belongs to the RuvB family. In terms of assembly, homohexamer. Forms an RuvA(8)-RuvB(12)-Holliday junction (HJ) complex. HJ DNA is sandwiched between 2 RuvA tetramers; dsDNA enters through RuvA and exits via RuvB. An RuvB hexamer assembles on each DNA strand where it exits the tetramer. Each RuvB hexamer is contacted by two RuvA subunits (via domain III) on 2 adjacent RuvB subunits; this complex drives branch migration. In the full resolvosome a probable DNA-RuvA(4)-RuvB(12)-RuvC(2) complex forms which resolves the HJ.

Its subcellular location is the cytoplasm. The catalysed reaction is ATP + H2O = ADP + phosphate + H(+). Functionally, the RuvA-RuvB-RuvC complex processes Holliday junction (HJ) DNA during genetic recombination and DNA repair, while the RuvA-RuvB complex plays an important role in the rescue of blocked DNA replication forks via replication fork reversal (RFR). RuvA specifically binds to HJ cruciform DNA, conferring on it an open structure. The RuvB hexamer acts as an ATP-dependent pump, pulling dsDNA into and through the RuvAB complex. RuvB forms 2 homohexamers on either side of HJ DNA bound by 1 or 2 RuvA tetramers; 4 subunits per hexamer contact DNA at a time. Coordinated motions by a converter formed by DNA-disengaged RuvB subunits stimulates ATP hydrolysis and nucleotide exchange. Immobilization of the converter enables RuvB to convert the ATP-contained energy into a lever motion, pulling 2 nucleotides of DNA out of the RuvA tetramer per ATP hydrolyzed, thus driving DNA branch migration. The RuvB motors rotate together with the DNA substrate, which together with the progressing nucleotide cycle form the mechanistic basis for DNA recombination by continuous HJ branch migration. Branch migration allows RuvC to scan DNA until it finds its consensus sequence, where it cleaves and resolves cruciform DNA. The sequence is that of Holliday junction branch migration complex subunit RuvB from Listeria monocytogenes serotype 4b (strain CLIP80459).